The sequence spans 301 residues: MTMKHDVKTFQGFILTLQEYWAQQGCAIVQPLDMEVGAGTFHPQTFLRSLGPEPMSSAYVQPSRRPTDGRYGENPNRLQHYYQFQVVLKPSPDNIQELYLGSLQALGIDTQVHDIRFVEDNWESPTLGAWGLGWEVWLNGMEVTQFTYFQQVGGIECSPVTGEITYGLERLAMYIQEVDSVYDLVWTDGPMGRVTYGDIFHQNEVEQSTYNFEHADVDFMFTLFDQCEKMCQHLLSLDKPLPLPAYEQVMKASHAFNLLDARHAISVTERQRYILRVRAMSKGVAESYYQAREALGFPLCK.

This sequence belongs to the class-II aminoacyl-tRNA synthetase family. Tetramer of two alpha and two beta subunits.

It localises to the cytoplasm. The catalysed reaction is tRNA(Gly) + glycine + ATP = glycyl-tRNA(Gly) + AMP + diphosphate. The polypeptide is Glycine--tRNA ligase alpha subunit (Shewanella denitrificans (strain OS217 / ATCC BAA-1090 / DSM 15013)).